A 498-amino-acid chain; its full sequence is Death-associated inhibitor of apoptosis 2 (498 aa).

BIR repeat units lie at residues 12 to 77, 116 to 180, and 215 to 280; these read RLAT…SMVL, RLVT…PRVQ, and RLRT…QFVL. The Zn(2+) site is built by C249, C252, H269, and C276. The segment at 451–486 adopts an RING-type zinc-finger fold; that stretch reads CKVCLDEEVGVVFLPCGHLATCNQCAPSVANCPMCR.

Belongs to the IAP family. Interacts with the caspase Strica. Interacts (via BIR2 domain) with rpr and grim. Interacts (via the BIR2 and BIR3 domains) with hid. Interacts (via BIR3 domain) with Drice. Interacts with Dredd; likely to bind Dredd simultaneously with Fadd to form a trimeric complex. In terms of processing, caspase-dependent cleavage is required for suppression of Drice-mediated cell death. Expressed in both principal and stellar cells of the Malphigian tubules.

Its subcellular location is the nucleus. It is found in the cytoplasm. Its function is as follows. Required for activation of NF-kappaB transcription factors in the immune deficiency (Imd) signaling cascade which is essential for innate immune responses upon infection by Gram-negative bacteria. Promotes cytoplasmic cleavage of Rel and its translocation to the nucleus where it drives expression of antimicrobial peptides. Binds, polyubiquitinates and activates Dredd which is required for Rel-mediated induction of antimicrobial peptides. Anti-apoptotic protein which binds, ubiquitinates and inactivates the effector caspase Drice. Suppresses rpr and hid-dependent cell death in the eye. However, has also been shown to have little, if any, role in the regulation of the canonical caspase-dependent apoptosis pathway. Plays a role in regulating the expression of ion channels. This Drosophila melanogaster (Fruit fly) protein is Death-associated inhibitor of apoptosis 2 (Diap2).